The sequence spans 358 residues: Bis(monoacylglycero)phosphate synthase CLN5 (358 aa).

A disordered region spans residues 1-23 (MAQVGSAGPGACGRRGAGAGAGP). Over 1–29 (MAQVGSAGPGACGRRGAGAGAGPERTTWR) the chain is Cytoplasmic. The span at 7–21 (AGPGACGRRGAGAGA) shows a compositional bias: gly residues. Residues 30 to 46 (WAPALLWLATAAAVAGD) traverse the membrane as a helical; Signal-anchor for type II membrane protein segment. The Lumenal segment spans residues 47–358 (PSRRQWPVPY…NRKNRTLSGL (312 aa)). 2 disulfides stabilise this stretch: cysteine 69-cysteine 158 and cysteine 76-cysteine 164. Histidine 116 serves as the catalytic Proton acceptor. 4 N-linked (GlcNAc...) asparagine glycosylation sites follow: asparagine 129, asparagine 142, asparagine 177, and asparagine 202. Residue cysteine 230 is the Nucleophile; Acyl-thioester intermediate of the active site. N-linked (GlcNAc...) asparagine glycosylation is found at asparagine 254, asparagine 270, and asparagine 280. The interval 303–342 (FLLSLLQIFDAVVIHREFYLFYNFEYWFLPMKYPFIKITY) is membrane-anchoring. Asparagine 352 is a glycosylation site (N-linked (GlcNAc...) asparagine).

The protein belongs to the CLN5 family. In terms of assembly, multimer. Interacts with SORT1, RAB5A and RAB7A. Interacts with PPT1, TPP1, CLN3, CLN6, CLN8, ATP5F1A and ATP5F1B. In terms of processing, N-glycosylated with both high mannose and complex type sugars. Glycosylation is important for proper folding and trafficking to the lysosomes. The type II membrane signal anchor is proteolytically cleaved to produce a mature form that is transported to the lysosomes (Bis(monoacylglycero)phosphate synthase CLN5, secreted form). Post-translationally, can undergo proteolytic cleavage at the C-terminus, probably by a cysteine protease and may involve the removal of approximately 10-15 residues from the C-terminal end.

It is found in the lysosome. It localises to the membrane. The catalysed reaction is S-hexadecanoyl-L-cysteinyl-[protein] + H2O = L-cysteinyl-[protein] + hexadecanoate + H(+). It catalyses the reaction 2 1-acyl-sn-glycero-3-phospho-(1'-sn-glycerol) = 1-acyl-sn-glycero-3-phospho-(3'-acyl-sn-1'-glycerol) + sn-glycero-3-phospho-(1'-sn-glycerol). The enzyme catalyses 2 1-(9Z-octadecenoyl)-sn-glycero-3-phospho-(1'-sn-glycerol) = 1-(9Z-octadecenoyl)-sn-glycero-3-phospho-(3'-(9Z-octadecenoyl)-1'-sn-glycerol) + sn-glycero-3-phospho-(1'-sn-glycerol). It carries out the reaction 2 1-octadecanoyl-sn-glycero-3-phospho-(1'-sn-glycerol) = 1-octadecanoyl-sn-glycero-3-phospho-(3'-octadecanoyl-1'-sn-glycerol) + sn-glycero-3-phospho-(1'-sn-glycerol). The catalysed reaction is 2 1-hexadecanoyl-sn-glycero-3-phospho-(1'-sn-glycerol) = 1-hexadecanoyl-sn-glycero-3-phospho-(3'-hexadecanoyl-1'-sn-glycerol) + sn-glycero-3-phospho-(1'-sn-glycerol). It catalyses the reaction 2 1-tetradecanoyl-sn-glycero-3-phospho-(1'-sn-glycerol) = 1-tetradecanoyl-sn-glycero-3-phospho-(3'-tetradecanoyl-1'-sn-glycerol) + sn-glycero-3-phospho-(1'-sn-glycerol). In terms of biological role, catalyzes the synthesis of bis(monoacylglycero)phosphate (BMP) via transacylation of 2 molecules of lysophosphatidylglycerol (LPG). BMP also known as lysobisphosphatidic acid plays a key role in the formation of intraluminal vesicles and in maintaining intracellular cholesterol homeostasis. Can use only LPG as the exclusive lysophospholipid acyl donor for base exchange and displays BMP synthase activity towards various LPGs (LPG 14:0, LPG 16:0, LPG 18:0, LPG 18:1) with a higher preference for longer chain lengths. Plays a role in influencing the retrograde trafficking of lysosomal sorting receptors SORT1 and IGF2R from the endosomes to the trans-Golgi network by controlling the recruitment of retromer complex to the endosomal membrane. Regulates the localization and activation of RAB7A which is required to recruit the retromer complex to the endosomal membrane. Its function is as follows. Exhibits palmitoyl protein thioesterase (S-depalmitoylation) activity in vitro and most likely plays a role in protein S-depalmitoylation. This is Bis(monoacylglycero)phosphate synthase CLN5 (CLN5) from Bos taurus (Bovine).